The primary structure comprises 2094 residues: Nuclear mitotic apparatus protein 1 (2094 aa).

The head (Globular) stretch occupies residues 1-210 (MTLHATRAAT…SPMGDILQTP (210 aa)). The residue at position 160 (S160) is a Phosphoserine. The residue at position 161 (T161) is a Phosphothreonine. A phosphoserine mark is found at S167 and S201. At T209 the chain carries Phosphothreonine. Positions 211–1681 (QFQMRRLKKQ…ADQQLRDLGK (1471 aa)) form a coiled coil. S269 carries the phosphoserine modification. N6-acetyllysine is present on K377. 2 positions are modified to phosphoserine: S386 and S398. K443 carries the N6-acetyllysine modification. Disordered stretches follow at residues 617–636 (QLQA…TQAQ) and 723–759 (LKEQ…AGRK). The segment covering 627-636 (NAQTSVTQAQ) has biased composition (polar residues). K878 is modified (N6-acetyllysine). Disordered regions lie at residues 921-1000 (SLEL…TQER), 1081-1143 (LVKK…EGLT), and 1173-1223 (ELGH…SSLI). Positions 935 to 951 (ASDQLGEQQGRPFSSTH) are enriched in polar residues. 2 stretches are compositionally biased toward basic and acidic residues: residues 956–972 (AMER…ERLR) and 983–998 (QEER…RLTQ). Residue S1183 is modified to Phosphoserine. The segment covering 1194 to 1206 (KAQDHSKAEEEWK) has biased composition (basic and acidic residues). A Phosphoserine modification is found at S1221. K1507 carries the post-translational modification N6-acetyllysine. The residue at position 1583 (S1583) is a Phosphoserine. K1681 participates in a covalent cross-link: Glycyl lysine isopeptide (Lys-Gly) (interchain with G-Cter in SUMO2). The segment at 1681–1858 (KFQVATDALK…NSALLSLPGY (178 aa)) is membrane-binding domain 1. Residues 1682–2094 (FQVATDALKS…TPRAKGKVKH (413 aa)) are tail (Globular). S1703, S1706, and S1710 each carry phosphoserine. Residues 1718 to 1743 (SVASKLPRTQPDGTSVPGEPASPISQ) form a disordered region. The Tankyrase-binding domain signature appears at 1724-1730 (PRTQPDG). A phosphoserine mark is found at S1739 and S1742. K1748 is covalently cross-linked (Glycyl lysine isopeptide (Lys-Gly) (interchain with G-Cter in SUMO1); alternate). K1748 participates in a covalent cross-link: Glycyl lysine isopeptide (Lys-Gly) (interchain with G-Cter in SUMO2); alternate. Residue S1751 is modified to Phosphoserine. A Phosphoserine; by PLK1 modification is found at S1754. The residue at position 1756 (Y1756) is a Phosphotyrosine. T1758 carries the phosphothreonine modification. The segment at 1760-1795 (TPARGQAPLETSLDSLGDAFPDSGRKTRSARRRTTQ) is disordered. The tract at residues 1770-1792 (TSLDSLGDAFPDSGRKTRSARRR) is 4.1-binding domain. S1771 carries the post-translational modification Phosphoserine; by PLK1. Residues S1774 and S1782 each carry the phosphoserine modification. T1786 is modified (phosphothreonine). K1804 is covalently cross-linked (Glycyl lysine isopeptide (Lys-Gly) (interchain with G-Cter in SUMO2)). Disordered regions lie at residues 1807–1883 (LEEP…GRNS) and 1937–2094 (EMKT…KVKH). A phosphoserine mark is found at S1812 and S1815. The span at 1812-1839 (SANSSFYSTQSAPASQANLRATSSTQSL) shows a compositional bias: polar residues. Position 1816 is a phosphoserine; by PLK1 (S1816). Y1818 carries the phosphotyrosine modification. S1822 bears the Phosphoserine mark. At S1826 the chain carries Phosphoserine; alternate. S1826 is a glycosylation site (O-linked (GlcNAc) serine; alternate). A phosphoserine mark is found at S1844 and S1869. A tubulin-binding domain region spans residues 1864–1967 (SSARRSQARM…AEGVGITTRQ (104 aa)). The segment at 1874-1908 (SSGAPQGRNSFYMGTCQDEPEQLDDWNRIAELQQR) is GPSM2-binding domain. Over residues 1937–1948 (EMKTGDPRETLR) the composition is skewed to basic and acidic residues. A Phosphoserine modification is found at S1951. The segment at 1963–2042 (ITTRQQRKRV…SILNTPKKLG (80 aa)) is membrane-binding domain 2. The Nuclear localization signal motif lies at 1966–1971 (RQQRKR). A phosphoserine mark is found at S1973 and S1974. At T1982 the chain carries Phosphothreonine. S1985 carries the phosphoserine modification. Residue T1997 is modified to Phosphothreonine; by CDK1. Residues 1997–2006 (TPRDRHEGRK) show a composition bias toward basic and acidic residues. S2029 is modified (phosphoserine). Residue T2037 is modified to Phosphothreonine. S2044 and S2059 each carry phosphoserine. S2069 carries the post-translational modification Phosphoserine; by CDK1. A compositionally biased stretch (low complexity) spans 2073-2085 (ATTTTGTATVATT). Phosphothreonine; by CDK1 is present on T2085.

In terms of assembly, homodimer. Also forms multiarm oligomers by association of C-terminal tail domains, oligomers may further assemble to form a hexagonal nuclear lattice-like network. Associates with the dynein-dynactin complex; this association promotes the transport and accumulation of NUMA1 at the mitotic spindle poles that is inhibited by the BRISC complex in a PLK1-dependent manner. Part of a spindle orientation complex at least composed of GNAI1, GPSM2 and NUMA1. Interacts (via C-terminus) with microtubules (MTs); this interaction is direct and promotes both MT bundle formation and stability in a dynein-dynactin complex- and CDK1-independent manner. Interacts with EPB41 and EPB41L2; these interactions are negatively regulated by CDK1 during metaphase and are important for anaphase-specific localization of NUMA1 in symmetrically dividing cells. Interacts (via C-terminus) with GPSM2 (via TPR repeats); this interaction is direct, prevented by competitive binding of INSC, is inhibited in a PLK1-dependent manner, blocks the association of NUMA1 with MTs and inhibits NUMA1-induced MT bundle formation, prevents the association of NUMA1 with SPAG5, induces mitotic spindle pole localization of GPSM2, both metaphase cell cortex localization of NUMA1 and mitotic spindle organization. Does not interact with GPSM2 during anaphase. Interacts (via C-terminus) with the nuclear importin alpha/importin beta receptor; this interaction is inhibited by RanGTP. Interacts (via C-terminus) with KPNB1; this interaction is inhibited by RanGTP and the BRISC complex. Interacts with ABRAXAS2 and the BRISC complex; these interactions regulate mitotic spindle assembly. Interacts (via N-terminal end of the coiled-coil domain) with RAE1; this interaction promotes mitotic spindle formation. Interacts (via C-terminus) with SPAG5 (via C-terminus); this interaction promotes the recruitment of SPAG5 to the MTs at spindle poles in a dynein-dynactin-dependent manner and regulates mitotic spindle organization and proper chromosome alignment during mitosis. Interacts with TNKS; this interaction occurs at the onset of mitosis. Interacts with TNKS2. Interacts with tubulin. Interacts with KHDC3 (via C-terminus). In terms of processing, phosphorylation and dephosphorylation on Thr-2037 regulates the extent of cortical NUMA1 and the dynein-dynactin complex localization during mitotic metaphase and anaphase. In metaphase, phosphorylation on Thr-2037 occurs in a kinase CDK1-dependent manner; this phosphorylation maintains low levels of cortical dynein-dynactin complex at metaphase, and hence proper spindle positioning. In anaphase, dephosphorylated on Thr-2037 by phosphatase PPP2CA; this dephosphorylation stimulates its membrane association and with the dynein-dynactin complex its enrichment at the cell cortex, and hence robust spindle elongation. Probably also phosphorylated on Thr-1997 and Ser-2069 by CDK1; these phosphorylations may regulate its cell cortex recruitment during metaphase and anaphase. Phosphorylated on Ser-1751, Ser-1754, Ser-1771 and Ser-1816 by PLK1; these phosphorylations induce cortical dynein-dynactin complex dissociation from the NUMA1-GPSM2 complex and negatively regulates cortical dynein-dynactin complex localization. Post-translationally, ADP-ribosylated by TNKS at the onset of mitosis; ADP-ribosylation is not required for its localization to spindle poles. O-glycosylated during cytokinesis at sites identical or close to phosphorylation sites, this interferes with the phosphorylation status. In terms of processing, ubiquitinated with 'Lys-63'-linked polyubiquitin chains. Deubiquitination by the BRISC complex is important for the incorporation of NUMA1 into mitotic spindle poles and normal spindle pole function, probably by modulating interactions between NUMA1, dynein-dynactin complex and importin-beta. Expressed in testis, speen, liver, lung, spinal cord and brain. Expressed in Purkinje neurons (at protein level).

Its subcellular location is the nucleus. The protein localises to the nucleoplasm. The protein resides in the nucleus matrix. It localises to the chromosome. It is found in the cytoplasm. Its subcellular location is the cytoskeleton. The protein localises to the microtubule organizing center. The protein resides in the centrosome. It localises to the spindle pole. It is found in the cell cortex. Its subcellular location is the cell membrane. The protein localises to the lateral cell membrane. Functionally, microtubule (MT)-binding protein that plays a role in the formation and maintenance of the spindle poles and the alignement and the segregation of chromosomes during mitotic cell division. Functions to tether the minus ends of MTs at the spindle poles, which is critical for the establishment and maintenance of the spindle poles. Plays a role in the establishment of the mitotic spindle orientation during metaphase and elongation during anaphase in a dynein-dynactin-dependent manner. In metaphase, part of a ternary complex composed of GPSM2 and G(i) alpha proteins, that regulates the recruitment and anchorage of the dynein-dynactin complex in the mitotic cell cortex regions situated above the two spindle poles, and hence regulates the correct oritentation of the mitotic spindle. During anaphase, mediates the recruitment and accumulation of the dynein-dynactin complex at the cell membrane of the polar cortical region through direct association with phosphatidylinositol 4,5-bisphosphate (PI(4,5)P2), and hence participates in the regulation of the spindle elongation and chromosome segregation. Also binds to other polyanionic phosphoinositides, such as phosphatidylinositol 3-phosphate (PIP), lysophosphatidic acid (LPA) and phosphatidylinositol triphosphate (PIP3), in vitro. Also required for proper orientation of the mitotic spindle during asymmetric cell divisions. Plays a role in mitotic MT aster assembly. Involved in anastral spindle assembly. Positively regulates TNKS protein localization to spindle poles in mitosis. Highly abundant component of the nuclear matrix where it may serve a non-mitotic structural role, occupies the majority of the nuclear volume. Required for epidermal differentiation and hair follicle morphogenesis. The chain is Nuclear mitotic apparatus protein 1 from Mus musculus (Mouse).